The primary structure comprises 397 residues: Pectate lyase 2 (397 aa).

The N-terminal stretch at Met-1 to Ser-25 is a signal peptide. N-linked (GlcNAc...) asparagine glycosylation is present at Asn-37. A disulfide bond links Cys-54 and Cys-71. Residues Asp-194, Asp-218, and Asp-222 each coordinate Ca(2+). Arg-274 is a catalytic residue.

This sequence belongs to the polysaccharide lyase 1 family. Amb a subfamily. As to quaternary structure, monomer. The cofactor is Ca(2+). The N-terminus is blocked. As to expression, pollen and flowers.

The enzyme catalyses Eliminative cleavage of (1-&gt;4)-alpha-D-galacturonan to give oligosaccharides with 4-deoxy-alpha-D-galact-4-enuronosyl groups at their non-reducing ends.. The protein operates within glycan metabolism; pectin degradation; 2-dehydro-3-deoxy-D-gluconate from pectin: step 2/5. Its function is as follows. Has pectate lyase activity. The polypeptide is Pectate lyase 2 (Ambrosia artemisiifolia (Common ragweed)).